A 229-amino-acid polypeptide reads, in one-letter code: Protein OPG034 (229 aa).

This sequence belongs to the orthopoxvirus OPG034 family.

In Vaccinia virus (strain Western Reserve) (VACV), this protein is Protein OPG034 (OPG034).